The following is a 64-amino-acid chain: Translational regulator CsrA 1 (64 aa).

It belongs to the CsrA/RsmA family. Homodimer; the beta-strands of each monomer intercalate to form a hydrophobic core, while the alpha-helices form wings that extend away from the core.

Its subcellular location is the cytoplasm. Functionally, a key translational regulator that binds mRNA to regulate translation initiation and/or mRNA stability. Mediates global changes in gene expression, shifting from rapid growth to stress survival by linking envelope stress, the stringent response and the catabolite repression systems. Usually binds in the 5'-UTR; binding at or near the Shine-Dalgarno sequence prevents ribosome-binding, repressing translation, binding elsewhere in the 5'-UTR can activate translation and/or stabilize the mRNA. Its function is antagonized by small RNA(s). This chain is Translational regulator CsrA 1, found in Pseudomonas syringae pv. tomato (strain ATCC BAA-871 / DC3000).